Reading from the N-terminus, the 316-residue chain is Olfactory receptor 56B2 (316 aa).

Residues 1 to 32 are Extracellular-facing; the sequence is MVLQELRDSNSSKFQVSEFILMGFPGIHSWQH. N10 carries N-linked (GlcNAc...) asparagine glycosylation. The helical transmembrane segment at 33–53 threads the bilayer; sequence WLSLPLALLYLLALSANILIL. Over 54-61 the chain is Cytoplasmic; it reads IIINKEAA. The chain crosses the membrane as a helical span at residues 62–82; that stretch reads LHQPMYYFLGILAMADIGLAT. The Extracellular portion of the chain corresponds to 83–106; sequence TIMPKILAILWFNAKTISLLECFA. C104 and C196 are oxidised to a cystine. The chain crosses the membrane as a helical span at residues 107–127; that stretch reads QMYAIHCFVAMESSTFVCMAI. Residues 128–146 are Cytoplasmic-facing; it reads DRYVAICRPLRYPSIITES. The chain crosses the membrane as a helical span at residues 147 to 167; it reads FVFKANGFMALRNSLCLISVP. Residues 168–203 are Extracellular-facing; sequence LLAAQRHYCSQNQIEHCLCSNLGVTSLSCDDRRINS. Residues 204–224 form a helical membrane-spanning segment; it reads INQVLLAWTLMGSDLGLIILS. Residues 225–244 are Cytoplasmic-facing; that stretch reads YALILYSVLKLNSPEAASKA. A helical transmembrane segment spans residues 245 to 265; sequence LSTCTSHLILILFFYTVIIVI. The Extracellular portion of the chain corresponds to 266 to 279; sequence SITRSTGMRVPLIP. Residues 280–300 traverse the membrane as a helical segment; that stretch reads VLLNVLHNVIPPALNPMVYAL. Residues 301 to 316 are Cytoplasmic-facing; sequence KNKELRQGLYKVLRLE.

The protein belongs to the G-protein coupled receptor 1 family.

The protein localises to the cell membrane. Functionally, odorant receptor. The chain is Olfactory receptor 56B2 from Homo sapiens (Human).